The sequence spans 344 residues: TATA box-binding protein-like 2 (344 aa).

A disordered region spans residues 78–143 (NKDRTVTGNK…SNQLSSETPN (66 aa)). The span at 110 to 120 (GSGLNLNSNSS) shows a compositional bias: low complexity. Residues 134-143 (SNQLSSETPN) are compositionally biased toward polar residues.

This sequence belongs to the TBP family. As to quaternary structure, interacts with TAF3.

It is found in the cytoplasm. It localises to the nucleus. Transcription factor required in complex with TAF3 for the differentiation of myoblasts into myocytes. The complex replaces TFIID at specific promoters at an early stage in the differentiation process. This is TATA box-binding protein-like 2 from Rattus norvegicus (Rat).